We begin with the raw amino-acid sequence, 301 residues long: Prohibitin-2 (301 aa).

Necessary for transcriptional repression regions lie at residues M19–A49 and A150–D174. Residues R191–M237 adopt a coiled-coil conformation.

Belongs to the prohibitin family. In terms of assembly, the mitochondrial prohibitin complex consists of two subunits (PHB1 and PHB2), assembled into a membrane-associated ring-shaped supercomplex of approximately 1 mDa.

It is found in the mitochondrion inner membrane. Its subcellular location is the cytoplasm. It localises to the nucleus. The protein localises to the cell membrane. Its function is as follows. Protein with pleiotropic attributes mediated in a cell-compartment- and tissue-specific manner, which include the plasma membrane-associated cell signaling functions, mitochondrial chaperone, and transcriptional co-regulator of transcription factors and sex steroid hormones in the nucleus. In terms of biological role, in the mitochondria, together with PHB, forms large ring complexes (prohibitin complexes) in the inner mitochondrial membrane (IMM) and functions as a chaperone protein that stabilizes mitochondrial respiratory enzymes and maintains mitochondrial integrity in the IMM, which is required for mitochondrial morphogenesis, neuronal survival, and normal lifespan. In the nucleus, serves as transcriptional co-regulator. This chain is Prohibitin-2 (phb2), found in Xenopus tropicalis (Western clawed frog).